Reading from the N-terminus, the 171-residue chain is Transcriptional repressor NrdR (171 aa).

Residues 1 to 10 (MQCPHCHHNG) are compositionally biased toward basic residues. Residues 1-21 (MQCPHCHHNGSRVVDSRPTDD) form a disordered region. The segment at 3 to 34 (CPHCHHNGSRVVDSRPTDDGRVIRRRRECENC) is a zinc-finger region. The ATP-cone domain occupies 49–139 (LLVIKKNGAR…VYRQFKDMHV (91 aa)). The interval 152–171 (KVKLAKPSAKTTHAPKRKKD) is disordered.

The protein belongs to the NrdR family. It depends on Zn(2+) as a cofactor.

Its function is as follows. Negatively regulates transcription of bacterial ribonucleotide reductase nrd genes and operons by binding to NrdR-boxes. This is Transcriptional repressor NrdR from Lactiplantibacillus plantarum (strain ATCC BAA-793 / NCIMB 8826 / WCFS1) (Lactobacillus plantarum).